Here is a 298-residue protein sequence, read N- to C-terminus: Homoserine kinase (298 aa).

P79 to A89 contacts ATP.

Belongs to the GHMP kinase family. Homoserine kinase subfamily.

The protein localises to the cytoplasm. It catalyses the reaction L-homoserine + ATP = O-phospho-L-homoserine + ADP + H(+). It participates in amino-acid biosynthesis; L-threonine biosynthesis; L-threonine from L-aspartate: step 4/5. In terms of biological role, catalyzes the ATP-dependent phosphorylation of L-homoserine to L-homoserine phosphate. This Pyrobaculum islandicum (strain DSM 4184 / JCM 9189 / GEO3) protein is Homoserine kinase.